The following is a 160-amino-acid chain: MRRAVCPGSLDPIHNGHLEVIARAAGLFDEVIVAVSTNYAKKYRFSLEERLEMASETLASLRGIVIEPMGAGLLAEYCRQRGASAIVKGIRSSSDFDYEVPMATMNRQLTGVETVFLPAEARYLHLSSTMIKEVEGLGGDVSDYVPRAVLRRFHEGKETN.

Substrate is bound at residue Ser-9. ATP-binding positions include 9-10 (SL) and His-17. Residues Lys-41, Leu-74, and Lys-88 each contribute to the substrate site. Residues 89–91 (GIR), Glu-99, and 123–129 (YLHLSST) each bind ATP.

The protein belongs to the bacterial CoaD family. Homohexamer. The cofactor is Mg(2+).

Its subcellular location is the cytoplasm. It carries out the reaction (R)-4'-phosphopantetheine + ATP + H(+) = 3'-dephospho-CoA + diphosphate. The protein operates within cofactor biosynthesis; coenzyme A biosynthesis; CoA from (R)-pantothenate: step 4/5. In terms of biological role, reversibly transfers an adenylyl group from ATP to 4'-phosphopantetheine, yielding dephospho-CoA (dPCoA) and pyrophosphate. In Renibacterium salmoninarum (strain ATCC 33209 / DSM 20767 / JCM 11484 / NBRC 15589 / NCIMB 2235), this protein is Phosphopantetheine adenylyltransferase.